The sequence spans 241 residues: Probable transcriptional regulatory protein lmo1535 (241 aa).

The span at 1–14 (MSGHSKWNNIQGRK) shows a compositional bias: polar residues. Positions 1–22 (MSGHSKWNNIQGRKNAQDSKRS) are disordered.

This sequence belongs to the TACO1 family.

The protein resides in the cytoplasm. This Listeria monocytogenes serovar 1/2a (strain ATCC BAA-679 / EGD-e) protein is Probable transcriptional regulatory protein lmo1535.